We begin with the raw amino-acid sequence, 330 residues long: Aspartate--ammonia ligase (330 aa).

This sequence belongs to the class-II aminoacyl-tRNA synthetase family. AsnA subfamily.

It localises to the cytoplasm. It catalyses the reaction L-aspartate + NH4(+) + ATP = L-asparagine + AMP + diphosphate + H(+). It functions in the pathway amino-acid biosynthesis; L-asparagine biosynthesis; L-asparagine from L-aspartate (ammonia route): step 1/1. The protein is Aspartate--ammonia ligase of Treponema pallidum (strain Nichols).